Consider the following 160-residue polypeptide: MVKKNSKKAAQPATIARNKRATFEYKFDEKFEAGLSLMGWEVKSIRAGKINISESYVMLKNGEAFLHHCHITPLHAASTHVVCDPTRPRKLLLNRRELDRLAGLVERQGYAIVPISMYWRKGAWVKVEIGLGKGKKAHDKRDDIKQRDWDIEKARVMKNK.

Belongs to the SmpB family.

Its subcellular location is the cytoplasm. Its function is as follows. Required for rescue of stalled ribosomes mediated by trans-translation. Binds to transfer-messenger RNA (tmRNA), required for stable association of tmRNA with ribosomes. tmRNA and SmpB together mimic tRNA shape, replacing the anticodon stem-loop with SmpB. tmRNA is encoded by the ssrA gene; the 2 termini fold to resemble tRNA(Ala) and it encodes a 'tag peptide', a short internal open reading frame. During trans-translation Ala-aminoacylated tmRNA acts like a tRNA, entering the A-site of stalled ribosomes, displacing the stalled mRNA. The ribosome then switches to translate the ORF on the tmRNA; the nascent peptide is terminated with the 'tag peptide' encoded by the tmRNA and targeted for degradation. The ribosome is freed to recommence translation, which seems to be the essential function of trans-translation. The sequence is that of SsrA-binding protein from Shewanella amazonensis (strain ATCC BAA-1098 / SB2B).